Reading from the N-terminus, the 498-residue chain is ATP synthase subunit beta, chloroplastic (498 aa).

An ATP-binding site is contributed by 172 to 179; the sequence is GGAGVGKT.

Belongs to the ATPase alpha/beta chains family. As to quaternary structure, F-type ATPases have 2 components, CF(1) - the catalytic core - and CF(0) - the membrane proton channel. CF(1) has five subunits: alpha(3), beta(3), gamma(1), delta(1), epsilon(1). CF(0) has four main subunits: a(1), b(1), b'(1) and c(9-12).

Its subcellular location is the plastid. The protein resides in the chloroplast thylakoid membrane. It catalyses the reaction ATP + H2O + 4 H(+)(in) = ADP + phosphate + 5 H(+)(out). Produces ATP from ADP in the presence of a proton gradient across the membrane. The catalytic sites are hosted primarily by the beta subunits. The sequence is that of ATP synthase subunit beta, chloroplastic from Nicotiana sylvestris (Wood tobacco).